The following is a 77-amino-acid chain: Translation initiation factor IF-1, chloroplastic (77 aa).

In terms of domain architecture, S1-like spans 1–71; the sequence is MKEQKLIHEG…TRGRIIYRLR (71 aa).

This sequence belongs to the IF-1 family. Component of the 30S ribosomal translation pre-initiation complex which assembles on the 30S ribosome in the order IF-2 and IF-3, IF-1 and N-formylmethionyl-tRNA(fMet); mRNA recruitment can occur at any time during PIC assembly.

The protein resides in the plastid. Its subcellular location is the chloroplast. Functionally, one of the essential components for the initiation of protein synthesis. Stabilizes the binding of IF-2 and IF-3 on the 30S subunit to which N-formylmethionyl-tRNA(fMet) subsequently binds. Helps modulate mRNA selection, yielding the 30S pre-initiation complex (PIC). Upon addition of the 50S ribosomal subunit IF-1, IF-2 and IF-3 are released leaving the mature 70S translation initiation complex. The protein is Translation initiation factor IF-1, chloroplastic of Phalaenopsis aphrodite subsp. formosana (Moth orchid).